A 134-amino-acid chain; its full sequence is Small ribosomal subunit protein uS8c (134 aa).

This sequence belongs to the universal ribosomal protein uS8 family. In terms of assembly, part of the 30S ribosomal subunit.

Its subcellular location is the plastid. It localises to the chloroplast. Its function is as follows. One of the primary rRNA binding proteins, it binds directly to 16S rRNA central domain where it helps coordinate assembly of the platform of the 30S subunit. This chain is Small ribosomal subunit protein uS8c (rps8), found in Chloranthus spicatus (Chulantree).